The chain runs to 198 residues: MKQPSALSALVEALRALPGVGPKSAQRMAYHLMQHDREGAEKLGRSLLFATEHLQHCEKCNTFTEAQICEVCSDTERDPTLLCVVETPADQIMLEQTMTWRGLYFVLMGRLSPLDGIGPKEIHFDRLVKRATDGVVKEVVLATNFTNEGEATAHYLGQTLKSRGLSVTRLARGVPVGGELEYVDAGTIARAMLDRRSI.

A C4-type zinc finger spans residues 57 to 72 (CEKCNTFTEAQICEVC). Positions 80-175 (TLLCVVETPA…SVTRLARGVP (96 aa)) constitute a Toprim domain.

It belongs to the RecR family.

In terms of biological role, may play a role in DNA repair. It seems to be involved in an RecBC-independent recombinational process of DNA repair. It may act with RecF and RecO. This chain is Recombination protein RecR, found in Paraburkholderia phymatum (strain DSM 17167 / CIP 108236 / LMG 21445 / STM815) (Burkholderia phymatum).